The primary structure comprises 108 residues: DVQMIQSPSSLSASLGDIVTMTCQASQGTSINLNWFQQKPGKAPKLLIYGASILEDGVPSRFSGSRYGTDFTLTISSLEDEDMATYFCLQHSYLPYTFGGGTKLEIKR.

Residues 1–23 (DVQMIQSPSSLSASLGDIVTMTC) are framework-1. Cys23 and Cys88 are oxidised to a cystine. The tract at residues 24 to 34 (QASQGTSINLN) is complementarity-determining-1. The interval 35 to 49 (WFQQKPGKAPKLLIY) is framework-2. Residues 50 to 56 (GASILED) form a complementarity-determining-2 region. Residues 57-88 (GVPSRFSGSRYGTDFTLTISSLEDEDMATYFC) are framework-3. The tract at residues 89-97 (LQHSYLPYT) is complementarity-determining-3. Residues 98–108 (FGGGTKLEIKR) are framework-4.

This is Immunoglobulin kappa variable 11-125 from Mus musculus (Mouse).